A 508-amino-acid chain; its full sequence is Octopamine receptor beta-1R (508 aa).

Residues 1–111 (MTLLQRLQAM…SHLALVFVKC (111 aa)) lie on the Extracellular side of the membrane. Residues 112 to 132 (FIIGFIILAAILGNMLVIVSV) traverse the membrane as a helical segment. At 133–139 (MRHRKLR) the chain is on the cytoplasmic side. Residues 140 to 160 (IITNYFVVSLAVADMLVALCA) form a helical membrane-spanning segment. The Extracellular segment spans residues 161-186 (MTFNASVMISGKWMFGSVMCDMWNSF). An N-linked (GlcNAc...) asparagine glycan is attached at Asn164. A helical transmembrane segment spans residues 187 to 209 (DVYFSTASIMHLCCISVDRYYAI). Residues 210-223 (VQPLDYPLIMTQRR) lie on the Cytoplasmic side of the membrane. A helical transmembrane segment spans residues 224–244 (VFIMLLMVWLSPALLSFLPIC). Residues 245-270 (SGWYTTTENYKYLKSNPHICEFKVNK) are Extracellular-facing. A helical membrane pass occupies residues 271–291 (AYAIVSSSMSFWIPGIVMLSM). The Cytoplasmic portion of the chain corresponds to 292–351 (YYRIYQEADRQERLVYRSKVAALLLEKHLQISQIPKPRPSIQVEQSTISTMRRERKAART). A helical membrane pass occupies residues 352–372 (LGIIMSAFLICWLPFFLWYIV). The Extracellular portion of the chain corresponds to 373-383 (SSLCDSCITPR). A helical transmembrane segment spans residues 384-404 (LLVGILFWIGYFNSALNPIIY). Topologically, residues 405 to 508 (AYFNRDFRAA…MQQLHPLYTN (104 aa)) are cytoplasmic. The segment at 440-464 (RDLEFGGPSRRGTNGAQRTGSGSAE) is disordered. A compositionally biased stretch (polar residues) spans 450–461 (RGTNGAQRTGSG).

This sequence belongs to the G-protein coupled receptor 1 family. In the adult, expressed in the superior protocerebrum and the optic lobe medulla of the central nervous system, nurse cells of egg chambers in the ovary at oogenic stages 1-10, and spermatogonia and spermatocytes in the testis. Expressed in embryonic and larval ventral nerve cord and brain lobe, and the larval imaginal disk and larval salivary gland. Also expressed in larval synaptic boutons and retinal cells in the optic disk.

Its subcellular location is the cell membrane. Autoreceptor for octopamine, which is a neurotransmitter, neurohormone, and neuromodulator in invertebrates. Negatively regulates synaptic growth by activating the inhibitory G protein Galphao and limiting cAMP production. Antagonizes the action of Octbeta2R which stimulates synaptic growth. This Drosophila melanogaster (Fruit fly) protein is Octopamine receptor beta-1R.